The primary structure comprises 314 residues: 3'-5' exoribonuclease YhaM (314 aa).

An HD domain is found at 163–279; sequence HVVSMLDLAK…LHYIDNLDAK (117 aa).

The protein belongs to the YhaM family.

Shows a 3'-5' exoribonuclease activity. This is 3'-5' exoribonuclease YhaM from Bacillus cereus (strain AH820).